Reading from the N-terminus, the 187-residue chain is dTTP/UTP pyrophosphatase (187 aa).

D65 (proton acceptor) is an active-site residue.

Belongs to the Maf family. YhdE subfamily. Requires a divalent metal cation as cofactor.

The protein resides in the cytoplasm. The catalysed reaction is dTTP + H2O = dTMP + diphosphate + H(+). It carries out the reaction UTP + H2O = UMP + diphosphate + H(+). Functionally, nucleoside triphosphate pyrophosphatase that hydrolyzes dTTP and UTP. May have a dual role in cell division arrest and in preventing the incorporation of modified nucleotides into cellular nucleic acids. The chain is dTTP/UTP pyrophosphatase from Deinococcus geothermalis (strain DSM 11300 / CIP 105573 / AG-3a).